The sequence spans 166 residues: PR-toxin biosynthesis cluster protein 10 (166 aa).

Functionally, part of the gene cluster that mediates the biosynthesis of PR-toxin, a bicyclic sesquiterpene belonging to the eremophilane class and acting as a mycotoxin. The first step of the pathway is catalyzed by the aristolochene synthase which performs the cyclization of trans,trans-farnesyl diphosphate (FPP) to the bicyclic sesquiterpene aristolochene. Following the formation of aristolochene, the non-oxygenated aristolochene is converted to the trioxygenated intermediate eremofortin B, via 7-epi-neopetasone. This conversion appears to involve three enzymes, a hydroxysterol oxidase-like enzyme, the quinone-oxidase prx3 that forms the quinone-type-structure in the bicyclic nucleus of aristolochene with the C8-oxo group and the C-3 hydroxyl group, and the P450 monooxygenase prx9 that introduces the epoxide at the double bond between carbons 1 and 2. No monoxy or dioxy-intermediates have been reported to be released to the broth, so these three early oxidative reactions may be coupled together. Eremofortin B is further oxidized by another P450 monooxygenase, that introduces a second epoxide between carbons 7 and 11 prior to acetylation to eremofortin A by the acetyltransferase prx11. The second epoxidation may be performed by a second P450 monooxygenase. After the acetylation step, eremofortin A is converted to eremofortin C and then to PR-toxin. First the conversion of eremofortin A to eremofortin C proceeds by oxidation of the side chain of the molecule at C-12 and is catalyzed by the short-chain oxidoreductase prx1. The cytochrome P450 monooxygenase prx8 also plays a role in this step. The primary alcohol formed at C-12 is finally oxidized by the short-chain alcohol dehydrogenase prx4 that forms PR-toxin. The chain is PR-toxin biosynthesis cluster protein 10 from Penicillium rubens (strain ATCC 28089 / DSM 1075 / NRRL 1951 / Wisconsin 54-1255) (Penicillium chrysogenum).